We begin with the raw amino-acid sequence, 514 residues long: Extracellular exo-inulinase (514 aa).

The N-terminal stretch at Met-1 to Ser-18 is a signal peptide. Substrate-binding positions include Asn-33 to Asp-34 and Gln-52. The Nucleophile role is filled by Asp-34. A glycan (N-linked (GlcNAc...) asparagine) is linked at Asn-56. The substrate site is built by Trp-60 and Ser-95. N-linked (GlcNAc...) asparagine glycans are attached at residues Asn-104 and Asn-110. Residue Arg-162 to Asp-163 participates in substrate binding. Asn-197 and Asn-203 each carry an N-linked (GlcNAc...) asparagine glycan. Substrate-binding residues include Glu-214 and Trp-300. The active-site Proton donor/acceptor is Glu-214. N-linked (GlcNAc...) asparagine glycans are attached at residues Asn-357, Asn-371, Asn-389, and Asn-422.

This sequence belongs to the glycosyl hydrolase 32 family.

It is found in the secreted. It catalyses the reaction Hydrolysis of terminal, non-reducing (2-&gt;1)- and (2-&gt;6)-linked beta-D-fructofuranose residues in fructans.. In terms of biological role, exo-inulinase involved in utilization of the plant storage polymer inulin, consisting of fructooligosaccharides with a degree of polymerization (DP) value from 2 to 60. Splits off terminal fructose units successively from the non-reducing end of the inulin molecule. This is Extracellular exo-inulinase from Meyerozyma guilliermondii (strain ATCC 6260 / CBS 566 / DSM 6381 / JCM 1539 / NBRC 10279 / NRRL Y-324) (Yeast).